Here is an 829-residue protein sequence, read N- to C-terminus: Cadherin-16 (829 aa).

A signal peptide spans 1-18; the sequence is MVPAWLWLLCFSVPQALV. The Extracellular segment spans residues 19 to 786; sequence EVSPTTLHVE…MKGMPTKLSA (768 aa). Cadherin domains follow at residues 25 to 126, 131 to 235, 242 to 336, 341 to 449, 455 to 564, and 569 to 665; these read LHVE…VPQF, YSAR…SIVE, EPVH…APVC, PPVS…APEF, GPVS…PPRL, and YEAD…APAL. Residues N517, N602, and N722 are each glycosylated (N-linked (GlcNAc...) asparagine). An ectodomain G region spans residues 666–786; it reads PLAPMPSRHL…MKGMPTKLSA (121 aa). Residues 787 to 807 traverse the membrane as a helical segment; sequence VGILVGTLAAIGFFLILIFTH. Residues 808-829 lie on the Cytoplasmic side of the membrane; the sequence is LALARKKDLDAPADNVPLKAAA.

As to expression, kidney specific. Limited to the basolateral membranes of renal tubular epithelial cells.

The protein resides in the cell membrane. Functionally, cadherins are calcium-dependent cell adhesion proteins. They preferentially interact with themselves in a homophilic manner in connecting cells; cadherins may thus contribute to the sorting of heterogeneous cell types. This is Cadherin-16 (CDH16) from Oryctolagus cuniculus (Rabbit).